The chain runs to 299 residues: tRNA dimethylallyltransferase (299 aa).

5–12 lines the ATP pocket; the sequence is GPTASGKT. 7–12 contributes to the substrate binding site; that stretch reads TASGKT. 3 interaction with substrate tRNA regions span residues 30–33, 154–158, and 235–240; these read DSAL, QRLSR, and RCVGYR.

It belongs to the IPP transferase family. As to quaternary structure, monomer. The cofactor is Mg(2+).

It catalyses the reaction adenosine(37) in tRNA + dimethylallyl diphosphate = N(6)-dimethylallyladenosine(37) in tRNA + diphosphate. Its function is as follows. Catalyzes the transfer of a dimethylallyl group onto the adenine at position 37 in tRNAs that read codons beginning with uridine, leading to the formation of N6-(dimethylallyl)adenosine (i(6)A). The sequence is that of tRNA dimethylallyltransferase from Shewanella denitrificans (strain OS217 / ATCC BAA-1090 / DSM 15013).